A 352-amino-acid polypeptide reads, in one-letter code: Ion-translocating oxidoreductase complex subunit D (352 aa).

Helical transmembrane passes span 20-40 (IMLL…WFFG), 42-62 (GTLV…ALVL), 68-88 (PIAA…LAVS), 89-109 (IPPL…VIIA), and 123-143 (PAMI…TNWL). T187 carries the post-translational modification FMN phosphoryl threonine. A run of 5 helical transmembrane segments spans residues 217-237 (GAGW…LLAI), 244-264 (IPVS…LFAP), 267-287 (LASP…FFIL), 301-321 (LIFG…GGYP), and 322-342 (DGVA…DYYT).

This sequence belongs to the NqrB/RnfD family. In terms of assembly, the complex is composed of six subunits: RsxA, RsxB, RsxC, RsxD, RsxE and RsxG. It depends on FMN as a cofactor.

It is found in the cell inner membrane. Its function is as follows. Part of a membrane-bound complex that couples electron transfer with translocation of ions across the membrane. Required to maintain the reduced state of SoxR. The chain is Ion-translocating oxidoreductase complex subunit D from Escherichia fergusonii (strain ATCC 35469 / DSM 13698 / CCUG 18766 / IAM 14443 / JCM 21226 / LMG 7866 / NBRC 102419 / NCTC 12128 / CDC 0568-73).